Here is a 221-residue protein sequence, read N- to C-terminus: MAVFIGGTGTDVGKTFFSSLILGKYGESLGLKYFKPVQTGDDSDRITLMRLTGLHESYVLKNYYSLAFAGSPHYSSELEGTEIDTDELSRHLYSIRDEKIIIEGAGGLLVPLNRRMLTLEVIRQAEIPLILVAPTSLGAINQTLLSIEAIQNRNIDLKGIYFLGIPDKTTEDNIRTITEWSGVISLGSFFLNSNERISCECFQEECIPKFDLDESIKNILV.

An ATP-binding site is contributed by 11-16 (DVGKTF). Thr15 contributes to the Mg(2+) binding site. Residue Lys35 is part of the active site. Substrate is bound at residue Thr39. ATP-binding positions include Asp44 and 103–106 (EGAG). Mg(2+)-binding residues include Asp44 and Glu103.

The protein belongs to the dethiobiotin synthetase family. Homodimer. The cofactor is Mg(2+).

It localises to the cytoplasm. It catalyses the reaction (7R,8S)-7,8-diammoniononanoate + CO2 + ATP = (4R,5S)-dethiobiotin + ADP + phosphate + 3 H(+). It participates in cofactor biosynthesis; biotin biosynthesis; biotin from 7,8-diaminononanoate: step 1/2. In terms of biological role, catalyzes a mechanistically unusual reaction, the ATP-dependent insertion of CO2 between the N7 and N8 nitrogen atoms of 7,8-diaminopelargonic acid (DAPA, also called 7,8-diammoniononanoate) to form a ureido ring. This is ATP-dependent dethiobiotin synthetase BioD from Leptospira interrogans serogroup Icterohaemorrhagiae serovar copenhageni (strain Fiocruz L1-130).